The primary structure comprises 337 residues: Protein-arginine kinase (337 aa).

Positions 12-240 constitute a Phosphagen kinase C-terminal domain; it reads IVIASKVKIL…NKLILREKNQ (229 aa). Residues 15 to 19, 162 to 166, and 193 to 198 contribute to the ATP site; these read ASKVK, RTKVF, and KSIYNS.

The protein belongs to the ATP:guanido phosphotransferase family.

It carries out the reaction L-arginyl-[protein] + ATP = N(omega)-phospho-L-arginyl-[protein] + ADP + H(+). Its function is as follows. Catalyzes the specific phosphorylation of arginine residues in proteins. This Clostridium perfringens (strain 13 / Type A) protein is Protein-arginine kinase.